The primary structure comprises 166 residues: Deglycase PYRAB04690 (166 aa).

In terms of domain architecture, PfpI endopeptidase spans 1-166 (MRVLILSADQ…WMREFVKLLK (166 aa)). Residue H101 is part of the active site.

Belongs to the peptidase C56 family. In terms of assembly, homohexamer formed by a dimer of trimers that assemble into a hollow ring structure.

The protein localises to the cytoplasm. The enzyme catalyses N(omega)-(1-hydroxy-2-oxopropyl)-L-arginyl-[protein] + H2O = lactate + L-arginyl-[protein] + H(+). It catalyses the reaction N(6)-(1-hydroxy-2-oxopropyl)-L-lysyl-[protein] + H2O = lactate + L-lysyl-[protein] + H(+). It carries out the reaction S-(1-hydroxy-2-oxopropyl)-L-cysteinyl-[protein] + H2O = lactate + L-cysteinyl-[protein] + H(+). The catalysed reaction is N(omega)-(1-hydroxy-2-oxoethyl)-L-arginyl-[protein] + H2O = L-arginyl-[protein] + glycolate + H(+). The enzyme catalyses N(6)-(1-hydroxy-2-oxoethyl)-L-lysyl-[protein] + H2O = glycolate + L-lysyl-[protein] + H(+). It catalyses the reaction S-(1-hydroxy-2-oxoethyl)-L-cysteinyl-[protein] + H2O = glycolate + L-cysteinyl-[protein] + H(+). Deglycase that catalyzes the deglycation of the Maillard adducts formed between amino groups of proteins and reactive carbonyl groups of glyoxals. Thus, functions as a protein deglycase that repairs methylglyoxal- and glyoxal-glycated proteins, and releases repaired proteins and lactate or glycolate, respectively. Deglycates cysteine, arginine and lysine residues in proteins, and thus reactivates these proteins by reversing glycation by glyoxals. Acts on early glycation intermediates (hemithioacetals and aminocarbinols), preventing the formation of advanced glycation endproducts (AGE) that cause irreversible damage. Also displays proteolytic activity. The sequence is that of Deglycase PYRAB04690 from Pyrococcus abyssi (strain GE5 / Orsay).